Consider the following 508-residue polypeptide: uncharacterized protein (508 aa).

It is found in the virion. This is an uncharacterized protein from Acanthamoeba polyphaga mimivirus (APMV).